A 643-amino-acid polypeptide reads, in one-letter code: RNA-binding protein MEX3D (643 aa).

Disordered stretches follow at residues 1–48 (MPGS…DAAA) and 61–92 (GLGG…APPD). Low complexity predominate over residues 18-34 (TAGDPGHPHPALAGAED). The segment covering 83–92 (CGEDEPAPPD) has biased composition (acidic residues). KH domains follow at residues 160 to 221 (MTEC…KREI) and 253 to 314 (QTTI…REEI). 3 disordered regions span residues 357-427 (PHPG…GTAT), 471-505 (GAPA…GGLS), and 519-583 (VGAV…APGP). Over residues 405-418 (GGSGNGGFTFGGDG) the composition is skewed to gly residues. T491 is modified (phosphothreonine). S495 is modified (phosphoserine). Composition is skewed to low complexity over residues 495–505 (SPTLPEPGGLS), 531–556 (LPPF…SSTL), and 567–583 (PSTT…APGP). The RING-type zinc-finger motif lies at 592–632 (CVVCSEGEAMAALVPCGHNLFCMDCAVRICGKSEPECPACR).

Its subcellular location is the cytoplasm. The protein resides in the nucleus. Its function is as follows. RNA binding protein, may be involved in post-transcriptional regulatory mechanisms. The polypeptide is RNA-binding protein MEX3D (Mex3d) (Mus musculus (Mouse)).